A 146-amino-acid chain; its full sequence is MKVDIFESSGASRVHSIPFYLQRISAGFPSPAQGYEKQELNLHEYCVRHPSATYFLRVSGSSMEDGRIHDGDVLVVDRSLTASHGSIVVACIHNEFTVKRLLLRPRPCLMPMNKDFPVYYIDPDNESVEIWGVVTHSLIEHPVCLR.

Catalysis depends on for autocatalytic cleavage activity residues Ser62 and Lys99.

It belongs to the peptidase S24 family.

In terms of biological role, involved in UV protection and mutation. The sequence is that of Protein MucA (mucA) from Escherichia coli.